Here is a 1578-residue protein sequence, read N- to C-terminus: FH1/FH2 domain-containing protein 3 (1578 aa).

The GBD/FH3 domain occupies 18-405; sequence NSTNFPEPSR…DLCEKDEEEE (388 aa). Disordered stretches follow at residues 324–518, 535–824, 915–942, 979–1013, 1418–1462, 1490–1514, and 1528–1565; these read HEDG…DKLP, SPLL…GVNG, VGRG…KTES, LGHR…VPPP, QQKQ…YAED, RTRS…PSVT, and SATQ…PEEA. Ser345 and Ser376 each carry phosphoserine. A compositionally biased stretch (polar residues) spans 368–383; sequence IQNIKSPLSAPTSPCS. The span at 399 to 425 shows a compositional bias: acidic residues; the sequence is EKDEEEEEEEEQPITEPNSEEEREDDA. Thr413 is modified (phosphothreonine). The span at 434–446 shows a compositional bias: low complexity; it reads ASSASGQSSPGKD. The segment covering 453–473 has biased composition (polar residues); that stretch reads ALHTTSSPTSQGRWLSASTAA. Over residues 553 to 583 the composition is skewed to low complexity; the sequence is SNFSSNSFQSSRPSPGPSGSPSYASSFSSPQ. Over residues 584-598 the composition is skewed to polar residues; sequence DTRSSPSGLLTSSFR. Residues 597 to 645 are a coiled coil; it reads FRQHQESLAAERERRRQEREERLQRIEREERNKFNREYLDKREEQRQAR. Residues 599–651 show a composition bias toward basic and acidic residues; the sequence is QHQESLAAERERRRQEREERLQRIEREERNKFNREYLDKREEQRQARGERYKY. Low complexity-rich tracts occupy residues 675–684 and 692–701; these read DLSLDLSLPA and SSQSPSADSQ. Over residues 751 to 761 the composition is skewed to acidic residues; it reads SQEEPVLELEP. Residues 762-782 are compositionally biased toward basic and acidic residues; that stretch reads EERASLSEKERQNEEVNERDN. The segment covering 784–793 has biased composition (low complexity); the sequence is SASSISSSSS. Residues 795-809 are compositionally biased toward basic and acidic residues; that stretch reads LEREEKEDKLSEDRA. Phosphoserine is present on Ser921. A Phosphothreonine modification is found at Thr933. Over residues 985–1013 the composition is skewed to pro residues; sequence PGPPPPPPPTFLGLPPPPPPPLLDSVPPP. An FH1 domain is found at 985–1016; that stretch reads PGPPPPPPPTFLGLPPPPPPPLLDSVPPPPVP. The FH2 domain maps to 1039 to 1435; the sequence is GQPAFTKKKK…HRERNKTRGK (397 aa). Residues 1420 to 1434 are compositionally biased toward basic residues; the sequence is KQKRANHRERNKTRG. A compositionally biased stretch (low complexity) spans 1444 to 1456; the sequence is SGSSPAAPSQPQG. The DAD domain occupies 1515 to 1547; that stretch reads DDAADEIMDRIVKSATQVPSQRVVPRERKRSRA. A compositionally biased stretch (basic residues) spans 1541–1556; sequence ERKRSRANRKSLRRTL.

The protein belongs to the formin homology family. As to quaternary structure, interacts with nestin/NES-based interfilament (IF). Interacts with SQSTM1. Expressed in the heart, including left ventricle, kidney, brain and skeletal muscle, including soleus and tibialis anterior (at protein level).

The protein resides in the cytoplasm. The protein localises to the cytoskeleton. It localises to the myofibril. Its subcellular location is the sarcomere. It is found in the z line. In terms of biological role, may play a role in actin filament polymerization in cardiomyocytes. Actin-organizing protein that may cause stress fiber formation together with cell elongation. The polypeptide is FH1/FH2 domain-containing protein 3 (Fhod3) (Mus musculus (Mouse)).